The chain runs to 66 residues: LYR motif-containing protein PHYPADRAFT_186863 (66 aa).

It belongs to the complex I LYR family. LYRM9 subfamily.

This is LYR motif-containing protein PHYPADRAFT_186863 from Physcomitrium patens (Spreading-leaved earth moss).